The following is an 86-amino-acid chain: Cell division topological specificity factor (86 aa).

It belongs to the MinE family.

Its function is as follows. Prevents the cell division inhibition by proteins MinC and MinD at internal division sites while permitting inhibition at polar sites. This ensures cell division at the proper site by restricting the formation of a division septum at the midpoint of the long axis of the cell. The protein is Cell division topological specificity factor of Rhizobium johnstonii (strain DSM 114642 / LMG 32736 / 3841) (Rhizobium leguminosarum bv. viciae).